Here is a 697-residue protein sequence, read N- to C-terminus: Zinc finger and BTB domain-containing protein 24 (697 aa).

One can recognise a BTB domain in the interval 10-133 (GQLVVHSDAH…AYTDFQNNHS (124 aa)). The span at 131 to 142 (NHSSPKPTTLNT) shows a compositional bias: polar residues. Disordered stretches follow at residues 131–176 (NHSS…EEKS) and 209–254 (EQIA…SRYS). A DNA-binding region (a.T hook) is located at residues 159–171 (KRKRGRPKKVNTL). Basic and acidic residues predominate over residues 212-245 (AAKEKEESEPTCEPSREEEMPVEKDENYDPKTED). 8 C2H2-type zinc fingers span residues 294 to 316 (ARCK…QRSH), 322 to 344 (FKCN…TRMH), 350 to 372 (YTCT…MSLH), 378 to 400 (FTCD…YRVH), 406 to 428 (PECK…LRTH), 434 to 456 (FTCE…IRIH), 462 to 484 (YSCG…CILH), and 490 to 512 (FSCP…LKIH). The interval 652 to 697 (QEQTEELHLATSTSDPAQHLQLTQEPGPPPPTHHVPQPTPLGQEQS) is disordered. Residues 677–690 (PGPPPPTHHVPQPT) show a composition bias toward pro residues.

The protein belongs to the krueppel C2H2-type zinc-finger protein family. As to quaternary structure, interacts with MN1. Widely expressed, with highest levels in naive B-cells.

The protein localises to the nucleus. In terms of biological role, may be involved in BMP2-induced transcription. The chain is Zinc finger and BTB domain-containing protein 24 (ZBTB24) from Homo sapiens (Human).